Reading from the N-terminus, the 227-residue chain is Cytochrome c oxidase subunit 2 (227 aa).

Residues 1-14 are Mitochondrial intermembrane-facing; sequence MAYPFQLGFQDATS. Residues 15-45 traverse the membrane as a helical segment; sequence PIMEELLHFHDHTLMIVFLISSLVLYIITLM. At 46–59 the chain is on the mitochondrial matrix side; it reads LTTKLTHTSTMDAQ. Residues 60 to 87 traverse the membrane as a helical segment; sequence EVETVWTILPAIILILIALPSLRILYMM. Residues 88–227 are Mitochondrial intermembrane-facing; that stretch reads DEVNNPSLTV…IFEKWSASML (140 aa). The Cu cation site is built by histidine 161, cysteine 196, glutamate 198, cysteine 200, histidine 204, and methionine 207. Glutamate 198 serves as a coordination point for Mg(2+).

The protein belongs to the cytochrome c oxidase subunit 2 family. In terms of assembly, component of the cytochrome c oxidase (complex IV, CIV), a multisubunit enzyme composed of 14 subunits. The complex is composed of a catalytic core of 3 subunits MT-CO1, MT-CO2 and MT-CO3, encoded in the mitochondrial DNA, and 11 supernumerary subunits COX4I, COX5A, COX5B, COX6A, COX6B, COX6C, COX7A, COX7B, COX7C, COX8 and NDUFA4, which are encoded in the nuclear genome. The complex exists as a monomer or a dimer and forms supercomplexes (SCs) in the inner mitochondrial membrane with NADH-ubiquinone oxidoreductase (complex I, CI) and ubiquinol-cytochrome c oxidoreductase (cytochrome b-c1 complex, complex III, CIII), resulting in different assemblies (supercomplex SCI(1)III(2)IV(1) and megacomplex MCI(2)III(2)IV(2)). Found in a complex with TMEM177, COA6, COX18, COX20, SCO1 and SCO2. Interacts with TMEM177 in a COX20-dependent manner. Interacts with COX20. Interacts with COX16. Cu cation serves as cofactor.

Its subcellular location is the mitochondrion inner membrane. It catalyses the reaction 4 Fe(II)-[cytochrome c] + O2 + 8 H(+)(in) = 4 Fe(III)-[cytochrome c] + 2 H2O + 4 H(+)(out). Functionally, component of the cytochrome c oxidase, the last enzyme in the mitochondrial electron transport chain which drives oxidative phosphorylation. The respiratory chain contains 3 multisubunit complexes succinate dehydrogenase (complex II, CII), ubiquinol-cytochrome c oxidoreductase (cytochrome b-c1 complex, complex III, CIII) and cytochrome c oxidase (complex IV, CIV), that cooperate to transfer electrons derived from NADH and succinate to molecular oxygen, creating an electrochemical gradient over the inner membrane that drives transmembrane transport and the ATP synthase. Cytochrome c oxidase is the component of the respiratory chain that catalyzes the reduction of oxygen to water. Electrons originating from reduced cytochrome c in the intermembrane space (IMS) are transferred via the dinuclear copper A center (CU(A)) of subunit 2 and heme A of subunit 1 to the active site in subunit 1, a binuclear center (BNC) formed by heme A3 and copper B (CU(B)). The BNC reduces molecular oxygen to 2 water molecules using 4 electrons from cytochrome c in the IMS and 4 protons from the mitochondrial matrix. The polypeptide is Cytochrome c oxidase subunit 2 (MT-CO2) (Balaenoptera borealis (Sei whale)).